Reading from the N-terminus, the 495-residue chain is Aspartyl/glutamyl-tRNA(Asn/Gln) amidotransferase subunit B (495 aa).

Belongs to the GatB/GatE family. GatB subfamily. In terms of assembly, heterotrimer of A, B and C subunits.

It carries out the reaction L-glutamyl-tRNA(Gln) + L-glutamine + ATP + H2O = L-glutaminyl-tRNA(Gln) + L-glutamate + ADP + phosphate + H(+). It catalyses the reaction L-aspartyl-tRNA(Asn) + L-glutamine + ATP + H2O = L-asparaginyl-tRNA(Asn) + L-glutamate + ADP + phosphate + 2 H(+). Allows the formation of correctly charged Asn-tRNA(Asn) or Gln-tRNA(Gln) through the transamidation of misacylated Asp-tRNA(Asn) or Glu-tRNA(Gln) in organisms which lack either or both of asparaginyl-tRNA or glutaminyl-tRNA synthetases. The reaction takes place in the presence of glutamine and ATP through an activated phospho-Asp-tRNA(Asn) or phospho-Glu-tRNA(Gln). The polypeptide is Aspartyl/glutamyl-tRNA(Asn/Gln) amidotransferase subunit B (Beijerinckia indica subsp. indica (strain ATCC 9039 / DSM 1715 / NCIMB 8712)).